Reading from the N-terminus, the 299-residue chain is DNA-binding transcriptional activator HetR (299 aa).

The active site involves Ser-152.

Belongs to the peptidase S48 family. As to quaternary structure, homodimer; disulfide-linked.

Its function is as follows. Controls heterocyst differentiation. Dimerization is required for DNA-binding. Has both a protease and a DNA-binding activity. Increased expression leads to more heterocysts than usual. This Nostoc punctiforme (strain ATCC 29133 / PCC 73102) protein is DNA-binding transcriptional activator HetR.